We begin with the raw amino-acid sequence, 640 residues long: uncharacterized protein (640 aa).

The TIR domain occupies 184 to 328 (VKRDTIFIIK…KVQRSIDTMI (145 aa)). Residues 613–640 (LPNDLDDEDEELDDSTLGRPDSDEEGGE) are disordered. Over residues 616-626 (DLDDEDEELDD) the composition is skewed to acidic residues.

This is an uncharacterized protein from Sinorhizobium fredii (strain NBRC 101917 / NGR234).